Consider the following 448-residue polypeptide: Zinc finger CCCH domain-containing protein 43 (448 aa).

The disordered stretch occupies residues 1–106; that stretch reads MVNSEEIADG…GWSENESENV (106 aa). The segment covering 24–45 has biased composition (basic and acidic residues); the sequence is SSHDRSLSDLNHAAEDLSDKLK. Residues 63-79 show a composition bias toward polar residues; that stretch reads VSESNGGLDSNAVVTIN. The span at 80-89 shows a compositional bias: acidic residues; the sequence is QEEEEEEEDR. 5 C3H1-type zinc fingers span residues 110–138, 158–186, 204–232, 346–374, and 392–420; these read RPGA…HPLA, KLGL…HTIP, RPGE…HPDP, RPDQ…HPKN, and RPDQ…HSVQ. The interval 424-448 is disordered; the sequence is STESSQAIVEPPQVSANGNESDGWN. Residues 437 to 448 are compositionally biased toward polar residues; it reads VSANGNESDGWN.

The protein localises to the nucleus. In Arabidopsis thaliana (Mouse-ear cress), this protein is Zinc finger CCCH domain-containing protein 43.